We begin with the raw amino-acid sequence, 113 residues long: Endoribonuclease SymE (113 aa).

In terms of domain architecture, SpoVT-AbrB spans 29–74 (GRYPDYSRIPAITLKGQWLEVAGFATGTAVDVKVMEGCIVLTAQPP).

The protein belongs to the SymE family.

The protein localises to the cytoplasm. Its function is as follows. Involved in the degradation and recycling of damaged RNA. It is itself a target for degradation by the ATP-dependent protease Lon. This Escherichia coli O7:K1 (strain IAI39 / ExPEC) protein is Endoribonuclease SymE.